A 177-amino-acid chain; its full sequence is ATP synthase subunit b (177 aa).

The chain crosses the membrane as a helical span at residues 19-39 (LFPNLPNFIAHVIATIVLVVI).

It belongs to the ATPase B chain family. In terms of assembly, F-type ATPases have 2 components, F(1) - the catalytic core - and F(0) - the membrane proton channel. F(1) has five subunits: alpha(3), beta(3), gamma(1), delta(1), epsilon(1). F(0) has three main subunits: a(1), b(2) and c(10-14). The alpha and beta chains form an alternating ring which encloses part of the gamma chain. F(1) is attached to F(0) by a central stalk formed by the gamma and epsilon chains, while a peripheral stalk is formed by the delta and b chains.

It localises to the cell membrane. Its function is as follows. F(1)F(0) ATP synthase produces ATP from ADP in the presence of a proton or sodium gradient. F-type ATPases consist of two structural domains, F(1) containing the extramembraneous catalytic core and F(0) containing the membrane proton channel, linked together by a central stalk and a peripheral stalk. During catalysis, ATP synthesis in the catalytic domain of F(1) is coupled via a rotary mechanism of the central stalk subunits to proton translocation. Component of the F(0) channel, it forms part of the peripheral stalk, linking F(1) to F(0). In Mesoplasma florum (strain ATCC 33453 / NBRC 100688 / NCTC 11704 / L1) (Acholeplasma florum), this protein is ATP synthase subunit b.